We begin with the raw amino-acid sequence, 205 residues long: Protein-L-isoaspartate O-methyltransferase (205 aa).

Residue Ser-52 is part of the active site.

It belongs to the methyltransferase superfamily. L-isoaspartyl/D-aspartyl protein methyltransferase family.

The protein resides in the cytoplasm. It catalyses the reaction [protein]-L-isoaspartate + S-adenosyl-L-methionine = [protein]-L-isoaspartate alpha-methyl ester + S-adenosyl-L-homocysteine. Its function is as follows. Catalyzes the methyl esterification of L-isoaspartyl residues in peptides and proteins that result from spontaneous decomposition of normal L-aspartyl and L-asparaginyl residues. It plays a role in the repair and/or degradation of damaged proteins. This is Protein-L-isoaspartate O-methyltransferase from Gloeobacter violaceus (strain ATCC 29082 / PCC 7421).